The following is a 427-amino-acid chain: UPF0597 protein CPR_0790 (427 aa).

This sequence belongs to the UPF0597 family.

This chain is UPF0597 protein CPR_0790, found in Clostridium perfringens (strain SM101 / Type A).